The sequence spans 351 residues: Phospho-N-acetylmuramoyl-pentapeptide-transferase (351 aa).

10 helical membrane-spanning segments follow: residues 17–37 (MAYA…HIIL), 62–82 (GIPT…LVFW), 85–105 (ILNV…FLGF), 124–144 (FKIY…YYFG), 161–181 (IDLG…ASNS), 190–210 (GLAI…AYLT), 230–250 (LVIF…FNAY), 254–274 (IMMG…AALI), 279–299 (ILFS…IIQV), and 328–348 (QVVI…LSTI).

The protein belongs to the glycosyltransferase 4 family. MraY subfamily. Requires Mg(2+) as cofactor.

Its subcellular location is the cell inner membrane. The enzyme catalyses UDP-N-acetyl-alpha-D-muramoyl-L-alanyl-gamma-D-glutamyl-meso-2,6-diaminopimeloyl-D-alanyl-D-alanine + di-trans,octa-cis-undecaprenyl phosphate = di-trans,octa-cis-undecaprenyl diphospho-N-acetyl-alpha-D-muramoyl-L-alanyl-D-glutamyl-meso-2,6-diaminopimeloyl-D-alanyl-D-alanine + UMP. Its pathway is cell wall biogenesis; peptidoglycan biosynthesis. Catalyzes the initial step of the lipid cycle reactions in the biosynthesis of the cell wall peptidoglycan: transfers peptidoglycan precursor phospho-MurNAc-pentapeptide from UDP-MurNAc-pentapeptide onto the lipid carrier undecaprenyl phosphate, yielding undecaprenyl-pyrophosphoryl-MurNAc-pentapeptide, known as lipid I. The sequence is that of Phospho-N-acetylmuramoyl-pentapeptide-transferase from Borrelia garinii subsp. bavariensis (strain ATCC BAA-2496 / DSM 23469 / PBi) (Borreliella bavariensis).